The primary structure comprises 108 residues: Nucleoid-associated protein ACP_0492 (108 aa).

Belongs to the YbaB/EbfC family. Homodimer.

Its subcellular location is the cytoplasm. It localises to the nucleoid. Functionally, binds to DNA and alters its conformation. May be involved in regulation of gene expression, nucleoid organization and DNA protection. The protein is Nucleoid-associated protein ACP_0492 of Acidobacterium capsulatum (strain ATCC 51196 / DSM 11244 / BCRC 80197 / JCM 7670 / NBRC 15755 / NCIMB 13165 / 161).